A 129-amino-acid chain; its full sequence is Transcription antitermination protein NusB (129 aa).

The protein belongs to the NusB family.

In terms of biological role, involved in transcription antitermination. Required for transcription of ribosomal RNA (rRNA) genes. Binds specifically to the boxA antiterminator sequence of the ribosomal RNA (rrn) operons. This Bacillus licheniformis (strain ATCC 14580 / DSM 13 / JCM 2505 / CCUG 7422 / NBRC 12200 / NCIMB 9375 / NCTC 10341 / NRRL NRS-1264 / Gibson 46) protein is Transcription antitermination protein NusB.